Reading from the N-terminus, the 367-residue chain is MPHLSNLKVQQFRNLGLVDITPSPTLNLVYGENGSGKTSLLEAISVLAHCRSFRTHKYRRLIQDTTTAFTVFATVEGSDAFKVGVQREWSGKSTAKLDGLSAKSSAQLATNLPVQIIDAHTFALLEGGSKARRKFFDWLVFHVKHEFKTAWANYVKCVKQRNSLLRHDKIAYSDLRPWDEQIAGLAATIDECRVECITPLIQAFKALMGECKFADNVDLTLAYQPGWKEGELSFPKQLEQAFARDRKLGYTILGPHKSDLKITANGSPAVEVLSRGQQKAVINALHIAEAQVYKTQIGRTPVFLLDDMPSELDANHIAILSGWLSNLGAQVFVTGVDANKLASVWPLQKNEAIKMFHVKQGEVTVSQ.

Gly31–Thr38 contacts ATP.

It belongs to the RecF family.

It is found in the cytoplasm. The RecF protein is involved in DNA metabolism; it is required for DNA replication and normal SOS inducibility. RecF binds preferentially to single-stranded, linear DNA. It also seems to bind ATP. The protein is DNA replication and repair protein RecF of Saccharophagus degradans (strain 2-40 / ATCC 43961 / DSM 17024).